The sequence spans 474 residues: tRNA-2-methylthio-N(6)-dimethylallyladenosine synthase (474 aa).

The region spanning 3–120 (KKLHIKTWGC…LPEMINAVRG (118 aa)) is the MTTase N-terminal domain. [4Fe-4S] cluster-binding residues include C12, C49, C83, C157, C161, and C164. Residues 143–375 (RADGPTAFVS…QERINQQAMA (233 aa)) enclose the Radical SAM core domain. Residues 378 to 441 (RRMLGTVQRI…TNSLRGKIVR (64 aa)) enclose the TRAM domain.

This sequence belongs to the methylthiotransferase family. MiaB subfamily. As to quaternary structure, monomer. It depends on [4Fe-4S] cluster as a cofactor.

It is found in the cytoplasm. The catalysed reaction is N(6)-dimethylallyladenosine(37) in tRNA + (sulfur carrier)-SH + AH2 + 2 S-adenosyl-L-methionine = 2-methylsulfanyl-N(6)-dimethylallyladenosine(37) in tRNA + (sulfur carrier)-H + 5'-deoxyadenosine + L-methionine + A + S-adenosyl-L-homocysteine + 2 H(+). Its function is as follows. Catalyzes the methylthiolation of N6-(dimethylallyl)adenosine (i(6)A), leading to the formation of 2-methylthio-N6-(dimethylallyl)adenosine (ms(2)i(6)A) at position 37 in tRNAs that read codons beginning with uridine. The sequence is that of tRNA-2-methylthio-N(6)-dimethylallyladenosine synthase from Klebsiella pneumoniae (strain 342).